The sequence spans 361 residues: NAD(P)H-quinone oxidoreductase subunit 1, chloroplastic (361 aa).

6 helical membrane passes run 25–45, 102–122, 125–145, 246–266, 298–318, and 334–354; these read IWLL…VLVI, VAVV…HLVL, LSIG…GLLM, YSGI…LVSS, VFGT…FLFI, and LLNL…LLTT.

It belongs to the complex I subunit 1 family. NDH is composed of at least 16 different subunits, 5 of which are encoded in the nucleus.

The protein resides in the plastid. The protein localises to the chloroplast thylakoid membrane. The enzyme catalyses a plastoquinone + NADH + (n+1) H(+)(in) = a plastoquinol + NAD(+) + n H(+)(out). It catalyses the reaction a plastoquinone + NADPH + (n+1) H(+)(in) = a plastoquinol + NADP(+) + n H(+)(out). NDH shuttles electrons from NAD(P)H:plastoquinone, via FMN and iron-sulfur (Fe-S) centers, to quinones in the photosynthetic chain and possibly in a chloroplast respiratory chain. The immediate electron acceptor for the enzyme in this species is believed to be plastoquinone. Couples the redox reaction to proton translocation, and thus conserves the redox energy in a proton gradient. In Nymphaea alba (White water-lily), this protein is NAD(P)H-quinone oxidoreductase subunit 1, chloroplastic.